The primary structure comprises 518 residues: MDASAGGGGNSLPTAGADGAKRRVCYFYDAEVGNYYYGQGHPMKPHRIRMTHALLAHYGLLDQMQVLKPHPARDRDLCRFHADDYVAFLRSVTPETQQDQIRALKRFNVGEDCPVFDGLYSFCQTYAGGSVGGAVKLNHGHDIAINWAGGLHHAKKCEASGFCYVNDIVLAILELLKYHQRVLYVDIDIHHGDGVEEAFYTTDRVMTVSFHKFGDYFPGTGDIRDIGHSKGKYYSLNVPLDDGIDDESYQSLFKPIMGKVMEVFRPGAVVLQCGADSLSGDRLGCFNLSIRGHAECVRFMRSFNVPLLLLGGGGYTIRNVARCWCYETGVALGHELTDKMPPNEYFEYFGPDYTLHVAPSNMENKNTRQQLDDIRSRLLDNLSKLRHAPSVQFQERPPEAELPEQDEDQEDPDERHHADSDVEMDDVKPLDDSGRRSSIQNVRVKRESAETDAADQDGNRVAAENTKGTEPAADGVGSSKQTVPTDASAMAIDEPGSLKVEPDNSNKLQDQPSVHQKT.

The tract at residues 22-333 (RRVCYFYDAE…WCYETGVALG (312 aa)) is histone deacetylase. His153 (proton donor/acceptor) is an active-site residue. The Zn(2+) site is built by Asp188, His190, and Asp276. Residues 387-518 (HAPSVQFQER…QDQPSVHQKT (132 aa)) form a disordered region. Over residues 401-412 (ELPEQDEDQEDP) the composition is skewed to acidic residues. Residues 413–435 (DERHHADSDVEMDDVKPLDDSGR) show a composition bias toward basic and acidic residues. The span at 503-518 (DNSNKLQDQPSVHQKT) shows a compositional bias: polar residues.

Belongs to the histone deacetylase family. HD Type 1 subfamily. Interacts with TPR3. The cofactor is Zn(2+). As to expression, expressed in roots and leaves.

Its subcellular location is the nucleus. The enzyme catalyses N(6)-acetyl-L-lysyl-[histone] + H2O = L-lysyl-[histone] + acetate. Responsible for the deacetylation of lysine residues on the N-terminal part of the core histones (H2A, H2B, H3 and H4). Histone deacetylation gives a tag for epigenetic repression and plays an important role in transcriptional regulation, cell cycle progression and developmental events. Histone deacetylases act via the formation of large multiprotein complexes. Negatively regulates the expression of the NAC48/NAC6 gene that controls root growth in seedlings. Epigenetically represses the expression of NAC48/NAC6 by deacetylating 'Lys-9' (H3K9ac), 'Lys-14' (H3K14ac) and 'Lys-18' (H3K18ac) of histone H3, and 'Lys-5' (H4K5ac), 'Lys-12' (H4K12ac) and 'Lys-16' (H4K16ac) of histone H4. Functions in the regulation of gene expression in the whole genome. Acts as a chromatin remodeling regulator to promote the formation of a repressive chromatin state. Functions with MODD via its interaction with TPR3, to down-regulates the histone acetylation level at BZIP46 target genes. BZIP46 is a positive regulator of abscisic acid (ABA) signaling and drought stress tolerance. The protein is Histone deacetylase 1 of Oryza sativa subsp. japonica (Rice).